Here is a 930-residue protein sequence, read N- to C-terminus: Isoleucine--tRNA ligase (930 aa).

The short motif at 57 to 67 (PYANGNIHVGH) is the 'HIGH' region element. L-isoleucyl-5'-AMP is bound at residue glutamate 554. The short motif at 595–599 (KMSKS) is the 'KMSKS' region element. Lysine 598 is a binding site for ATP. Zn(2+) contacts are provided by cysteine 888, cysteine 891, cysteine 908, and cysteine 911.

The protein belongs to the class-I aminoacyl-tRNA synthetase family. IleS type 1 subfamily. Monomer. The cofactor is Zn(2+).

The protein localises to the cytoplasm. The enzyme catalyses tRNA(Ile) + L-isoleucine + ATP = L-isoleucyl-tRNA(Ile) + AMP + diphosphate. In terms of biological role, catalyzes the attachment of isoleucine to tRNA(Ile). As IleRS can inadvertently accommodate and process structurally similar amino acids such as valine, to avoid such errors it has two additional distinct tRNA(Ile)-dependent editing activities. One activity is designated as 'pretransfer' editing and involves the hydrolysis of activated Val-AMP. The other activity is designated 'posttransfer' editing and involves deacylation of mischarged Val-tRNA(Ile). This is Isoleucine--tRNA ligase from Streptococcus sanguinis (strain SK36).